We begin with the raw amino-acid sequence, 441 residues long: Chitinase-like protein Idgf3 (441 aa).

An N-terminal signal peptide occupies residues M1–A23. The 417-residue stretch at P25–L441 folds into the GH18 domain. A disulfide bridge connects residues C29 and C56. An N-linked (GlcNAc...) asparagine glycan is attached at N221. A disordered region spans residues K307 to K331. C342 and C425 are oxidised to a cystine.

The protein belongs to the glycosyl hydrolase 18 family. IDGF subfamily. Glycosylated. Primarily expressed in yolk cells and fat body. In larvae, it is expressed in small and large salivary gland cells, and weakly expressed in imaginal disks. Less expressed than Idgf2 and Idgf4.

The protein resides in the secreted. Functionally, cooperates with insulin-like peptides to stimulate the proliferation, polarization and motility of imaginal disk cells. May act by stabilizing the binding of insulin-like peptides to its receptor through a simultaneous interaction with both molecules to form a multiprotein signaling complex. The chain is Chitinase-like protein Idgf3 (Idgf3) from Drosophila melanogaster (Fruit fly).